The chain runs to 518 residues: PTS system mannitol-specific EIICB component (518 aa).

Topologically, residues 1 to 31 (MDTMSNSQQNKGIGRKVQAFGSFLSSMIMPN) are cytoplasmic. A PTS EIIC type-2 domain is found at 20 to 352 (FGSFLSSMIM…LKFTKDPKQD (333 aa)). The chain crosses the membrane as a helical span at residues 32-53 (IGAFIAWGFIAAIFIDNGWFPN). The Extracellular segment spans residues 54-57 (KDLA). A helical membrane pass occupies residues 58-78 (QLAGPMITYLIPLLIAFSGGR). Over 79-142 (LIHDLRGGII…QGFEMLFNNF (64 aa)) the chain is Cytoplasmic. Residues 143–164 (SAGILGFIMTIFGFEVLAPIMK) traverse the membrane as a helical segment. Residues 165-173 (FIMHILSVG) lie on the Extracellular side of the membrane. Residues 174–194 (VEALVHAHLLPLVSILVEPAK) form a helical membrane-spanning segment. The Cytoplasmic portion of the chain corresponds to 195–281 (IVFLNNAINH…VLMRPLLFVS (87 aa)). The chain crosses the membrane as a helical span at residues 282 to 301 (VILGGMTGVATYSLLDFGFK). Residues 302–321 (TPASPGSIIVYAINAPKGEF) lie on the Extracellular side of the membrane. A helical membrane pass occupies residues 322–343 (LHMLTGVVLAALVSFVVSALIL). Topologically, residues 344-518 (KFTKDPKQDL…LINNLKEDQD (175 aa)) are cytoplasmic. Residues 369–406 (SVASKLSAKDDNKAADNKTAETTTATAASNKAEDKDSD) are disordered. A compositionally biased stretch (basic and acidic residues) spans 375-387 (SAKDDNKAADNKT). A compositionally biased stretch (low complexity) spans 388 to 398 (AETTTATAASN). In terms of domain architecture, PTS EIIB type-2 spans 426–518 (DHVIFACDAG…LINNLKEDQD (93 aa)). The active-site Phosphocysteine intermediate is cysteine 432. Cysteine 432 carries the phosphocysteine; by EIIA modification.

As to quaternary structure, homodimer.

It localises to the cell membrane. The enzyme catalyses D-mannitol(out) + N(pros)-phospho-L-histidyl-[protein] = D-mannitol 1-phosphate(in) + L-histidyl-[protein]. Its function is as follows. The phosphoenolpyruvate-dependent sugar phosphotransferase system (sugar PTS), a major carbohydrate active transport system, catalyzes the phosphorylation of incoming sugar substrates concomitantly with their translocation across the cell membrane. The enzyme II CmtAB PTS system is involved in D-mannitol transport. This chain is PTS system mannitol-specific EIICB component, found in Staphylococcus carnosus.